A 775-amino-acid polypeptide reads, in one-letter code: ATP-dependent 6-phosphofructokinase 2 (775 aa).

The tract at residues Met1–Thr390 is N-terminal catalytic PFK domain 1. ATP-binding positions include Gly25, Arg88–Cys89, and Gly118–Ser121. Residue Asp119 coordinates Mg(2+). Residues Ser164 to Asp166, Arg201, Met208 to Arg210, Glu264, Arg292, and His298 to Arg301 contribute to the substrate site. Residue Asp166 is the Proton acceptor of the active site. The interval Ser391–Met404 is interdomain linker. Positions Arg405–Asn775 are C-terminal regulatory PFK domain 2. Beta-D-fructose 2,6-bisphosphate is bound by residues Ser537–Asn541, Gln582–Ala584, Asp640, and His672–Gln675.

Belongs to the phosphofructokinase type A (PFKA) family. ATP-dependent PFK group I subfamily. Eukaryotic two domain clade 'E' sub-subfamily. As to quaternary structure, homotetramer. Requires Mg(2+) as cofactor.

Its subcellular location is the cytoplasm. It catalyses the reaction beta-D-fructose 6-phosphate + ATP = beta-D-fructose 1,6-bisphosphate + ADP + H(+). Its pathway is carbohydrate degradation; glycolysis; D-glyceraldehyde 3-phosphate and glycerone phosphate from D-glucose: step 3/4. Its activity is regulated as follows. Allosterically activated by ADP, AMP, or fructose 2,6-bisphosphate, and allosterically inhibited by ATP or citrate. Catalyzes the phosphorylation of D-fructose 6-phosphate to fructose 1,6-bisphosphate by ATP, the first committing step of glycolysis. This Aspergillus oryzae (strain ATCC 42149 / RIB 40) (Yellow koji mold) protein is ATP-dependent 6-phosphofructokinase 2 (pfkB).